Consider the following 40-residue polypeptide: Dolichyl-diphosphooligosaccharide--protein glycosyltransferase subunit 4 (40 aa).

The Lumenal portion of the chain corresponds to 1–4 (MITD). A helical transmembrane segment spans residues 5–25 (VQLAIFSNVLGVFLFLLVVAY). Topologically, residues 26–40 (HYINANTGKPIPKAK) are cytoplasmic.

The protein belongs to the OST4 family. In terms of assembly, component of the oligosaccharyltransferase (OST) complex.

The protein localises to the endoplasmic reticulum membrane. Subunit of the oligosaccharyl transferase (OST) complex that catalyzes the initial transfer of a defined glycan (Glc(3)Man(9)GlcNAc(2) in eukaryotes) from the lipid carrier dolichol-pyrophosphate to an asparagine residue within an Asn-X-Ser/Thr consensus motif in nascent polypeptide chains, the first step in protein N-glycosylation. N-glycosylation occurs cotranslationally and the complex associates with the Sec61 complex at the channel-forming translocon complex that mediates protein translocation across the endoplasmic reticulum (ER). All subunits are required for a maximal enzyme activity. In Drosophila ananassae (Fruit fly), this protein is Dolichyl-diphosphooligosaccharide--protein glycosyltransferase subunit 4.